Reading from the N-terminus, the 358-residue chain is Phosphoribosylformylglycinamidine cyclo-ligase (358 aa).

The protein belongs to the AIR synthase family.

The protein resides in the cytoplasm. The catalysed reaction is 2-formamido-N(1)-(5-O-phospho-beta-D-ribosyl)acetamidine + ATP = 5-amino-1-(5-phospho-beta-D-ribosyl)imidazole + ADP + phosphate + H(+). The protein operates within purine metabolism; IMP biosynthesis via de novo pathway; 5-amino-1-(5-phospho-D-ribosyl)imidazole from N(2)-formyl-N(1)-(5-phospho-D-ribosyl)glycinamide: step 2/2. The polypeptide is Phosphoribosylformylglycinamidine cyclo-ligase (Chromohalobacter salexigens (strain ATCC BAA-138 / DSM 3043 / CIP 106854 / NCIMB 13768 / 1H11)).